Here is a 454-residue protein sequence, read N- to C-terminus: tRNA modification GTPase MnmE (454 aa).

The (6S)-5-formyl-5,6,7,8-tetrahydrofolate site is built by Arg23, Glu80, and Lys120. In terms of domain architecture, TrmE-type G spans 216–377; that stretch reads GMKVVIAGRP…LRDHLKQSMG (162 aa). Residue Asn226 coordinates K(+). GTP contacts are provided by residues 226–231, 245–251, 270–273, 335–338, and 358–360; these read NAGKSS, TAIAGTT, DTAG, NKAD, and SAR. Ser230 lines the Mg(2+) pocket. K(+) contacts are provided by Thr245, Ile247, and Thr250. Thr251 provides a ligand contact to Mg(2+). (6S)-5-formyl-5,6,7,8-tetrahydrofolate is bound at residue Lys454.

It belongs to the TRAFAC class TrmE-Era-EngA-EngB-Septin-like GTPase superfamily. TrmE GTPase family. Homodimer. Heterotetramer of two MnmE and two MnmG subunits. The cofactor is K(+).

The protein localises to the cytoplasm. In terms of biological role, exhibits a very high intrinsic GTPase hydrolysis rate. Involved in the addition of a carboxymethylaminomethyl (cmnm) group at the wobble position (U34) of certain tRNAs, forming tRNA-cmnm(5)s(2)U34. This is tRNA modification GTPase MnmE from Pectobacterium atrosepticum (strain SCRI 1043 / ATCC BAA-672) (Erwinia carotovora subsp. atroseptica).